The primary structure comprises 92 residues: MIKYGVTIYVYGRVQGVGFRYQTFRWAKLNRLTGYVCNLHDGSVKIVAYGDSEQLNTLTHWLEQGGPPGARIDNFSSQSCAVEDIADFIVRH.

An Acylphosphatase-like domain is found at 5 to 92; that stretch reads GVTIYVYGRV…EDIADFIVRH (88 aa). Active-site residues include arginine 20 and asparagine 38.

Belongs to the acylphosphatase family.

It catalyses the reaction an acyl phosphate + H2O = a carboxylate + phosphate + H(+). The polypeptide is Acylphosphatase (acyP) (Photorhabdus laumondii subsp. laumondii (strain DSM 15139 / CIP 105565 / TT01) (Photorhabdus luminescens subsp. laumondii)).